The primary structure comprises 438 residues: tRNA modification GTPase MnmE (438 aa).

Positions 20, 76, and 115 each coordinate (6S)-5-formyl-5,6,7,8-tetrahydrofolate. Residues N210–D370 form the TrmE-type G domain. Position 220 (N220) interacts with K(+). GTP is bound by residues N220–T225, T239–T245, and D264–G267. Mg(2+) is bound at residue S224. Residues T239, I241, and T244 each coordinate K(+). A Mg(2+)-binding site is contributed by T245. K438 provides a ligand contact to (6S)-5-formyl-5,6,7,8-tetrahydrofolate.

This sequence belongs to the TRAFAC class TrmE-Era-EngA-EngB-Septin-like GTPase superfamily. TrmE GTPase family. In terms of assembly, homodimer. Heterotetramer of two MnmE and two MnmG subunits. The cofactor is K(+).

It is found in the cytoplasm. Exhibits a very high intrinsic GTPase hydrolysis rate. Involved in the addition of a carboxymethylaminomethyl (cmnm) group at the wobble position (U34) of certain tRNAs, forming tRNA-cmnm(5)s(2)U34. The chain is tRNA modification GTPase MnmE from Carsonella ruddii (strain PV).